The primary structure comprises 101 residues: Small ribosomal subunit protein uS14 (101 aa).

This sequence belongs to the universal ribosomal protein uS14 family. Part of the 30S ribosomal subunit. Contacts proteins S3 and S10.

Its function is as follows. Binds 16S rRNA, required for the assembly of 30S particles and may also be responsible for determining the conformation of the 16S rRNA at the A site. The sequence is that of Small ribosomal subunit protein uS14 from Leptothrix cholodnii (strain ATCC 51168 / LMG 8142 / SP-6) (Leptothrix discophora (strain SP-6)).